A 95-amino-acid chain; its full sequence is Small ribosomal subunit protein bS18 (95 aa).

The protein belongs to the bacterial ribosomal protein bS18 family. In terms of assembly, part of the 30S ribosomal subunit. Forms a tight heterodimer with protein bS6.

In terms of biological role, binds as a heterodimer with protein bS6 to the central domain of the 16S rRNA, where it helps stabilize the platform of the 30S subunit. The polypeptide is Small ribosomal subunit protein bS18 (Rickettsia peacockii (strain Rustic)).